Reading from the N-terminus, the 382-residue chain is Gap junction alpha-1 protein (382 aa).

Topologically, residues 2 to 23 are cytoplasmic; sequence GDWSALGKLLDKVQAYSTAGGK. Serine 5 is modified (phosphoserine). Residues 24 to 44 form a helical membrane-spanning segment; the sequence is VWLSVLFIFRILLLGTAVESA. The Extracellular segment spans residues 45-76; the sequence is WGDEQSAFRCNTQQPGCENVCYDKSFPISHVR. Disulfide bonds link cysteine 54/cysteine 192 and cysteine 187/cysteine 198. A helical transmembrane segment spans residues 77–97; sequence FWVLQIIFVSVPTLLYLAHVF. Over 98–155 the chain is Cytoplasmic; it reads YVMRKEEKLNKKEEELKVAQTDGVNVEMHLKQIEIKKFKYGIEEHGKVKMRGGLLRTY. Residue lysine 144 forms a Glycyl lysine isopeptide (Lys-Gly) (interchain with G-Cter in SUMO) linkage. A helical transmembrane segment spans residues 156–176; it reads IISILFKSVFEVAFLLIQWYI. The Extracellular segment spans residues 177-207; it reads YGFSLSAVYTCKRDPCPHQVDCFLSRPTEKT. Residues 208 to 228 traverse the membrane as a helical segment; it reads IFIIFMLVVSLVSLALNIIEL. The Cytoplasmic segment spans residues 229–382; sequence FYVFFKGVKD…SRPRPDDLEI (154 aa). Lysine 237 is covalently cross-linked (Glycyl lysine isopeptide (Lys-Gly) (interchain with G-Cter in SUMO)). Residues 244 to 382 are interaction with NOV; it reads SDPYHATTGP…SRPRPDDLEI (139 aa). The residue at position 247 (tyrosine 247) is a Phosphotyrosine. Phosphoserine is present on residues serine 255, serine 257, and serine 262. Positions 264–382 are interaction with UBQLN4; that stretch reads KYAYFNGCSS…SRPRPDDLEI (119 aa). An S-nitrosocysteine modification is found at cysteine 271. The residue at position 275 (threonine 275) is a Phosphothreonine. A phosphoserine mark is found at serine 306, serine 314, and serine 325. Positions 317-332 are enriched in polar residues; it reads QNRMGQAGSTISNSHA. The interval 317-382 is disordered; the sequence is QNRMGQAGST…SRPRPDDLEI (66 aa). Phosphothreonine is present on threonine 326. Residues serine 328, serine 330, and serine 365 each carry the phosphoserine modification. The segment covering 362–374 has biased composition (low complexity); it reads RPSSRASSRASSR. The residue at position 368 (serine 368) is a Phosphoserine; by PKC/PRKCG and PKC/PRKCD. 2 positions are modified to phosphoserine: serine 369 and serine 373.

This sequence belongs to the connexin family. Alpha-type (group II) subfamily. In terms of assembly, a connexon is composed of a hexamer of connexins. Interacts with SGSM3. Interacts with RIC1/CIP150. Interacts with CNST and CSNK1D. Interacts (via C-terminus) with TJP1. Interacts (via C-terminus) with SRC (via SH3 domain). Interacts (not ubiquitinated) with UBQLN4 (via UBA domain). Interacts with NOV. Interacts with TMEM65. Interacts with ANK3/ANKG and PKP2. Post-translationally, contains at least one intramolecular disulfide bond. In terms of processing, phosphorylation at Ser-325, Ser-328 and Ser-330 by CK1 modulates gap junction assembly. Phosphorylated at Ser-368 by PRKCG; phosphorylation induces disassembly of gap junction plaques and inhibition of gap junction activity. Phosphorylation at Ser-368 by PRKCD triggers its internalization into small vesicles leading to proteasome-mediated degradation. Sumoylated with SUMO1, SUMO2 and SUMO3, which may regulate the level of functional Cx43 gap junctions at the plasma membrane. May be desumoylated by SENP1 or SENP2. Post-translationally, S-nitrosylation at Cys-271 is enriched at the muscle endothelial gap junction in arteries, it augments channel permeability and may regulate of smooth muscle cell to endothelial cell communication. In terms of processing, acetylated in the developing cortex; leading to delocalization from the cell membrane. Detected in ventricle and atrium (at protein level).

It is found in the cell membrane. The protein localises to the cell junction. The protein resides in the gap junction. It localises to the endoplasmic reticulum. Its function is as follows. Gap junction protein that acts as a regulator of bladder capacity. A gap junction consists of a cluster of closely packed pairs of transmembrane channels, the connexons, through which materials of low MW diffuse from one cell to a neighboring cell. Negative regulator of bladder functional capacity: acts by enhancing intercellular electrical and chemical transmission, thus sensitizing bladder muscles to cholinergic neural stimuli and causing them to contract. May play a role in cell growth inhibition through the regulation of NOV expression and localization. Plays an essential role in gap junction communication in the ventricles. This is Gap junction alpha-1 protein (Gja1) from Rattus norvegicus (Rat).